The primary structure comprises 171 residues: NADH-quinone oxidoreductase subunit I (171 aa).

4Fe-4S ferredoxin-type domains lie at 63–92 (RRYE…IESD) and 102–131 (TRYD…ETQI). [4Fe-4S] cluster is bound by residues cysteine 72, cysteine 75, cysteine 78, cysteine 82, cysteine 111, cysteine 114, cysteine 117, and cysteine 121.

It belongs to the complex I 23 kDa subunit family. As to quaternary structure, NDH-1 is composed of 14 different subunits. Subunits NuoA, H, J, K, L, M, N constitute the membrane sector of the complex. It depends on [4Fe-4S] cluster as a cofactor.

It is found in the cell inner membrane. It catalyses the reaction a quinone + NADH + 5 H(+)(in) = a quinol + NAD(+) + 4 H(+)(out). Functionally, NDH-1 shuttles electrons from NADH, via FMN and iron-sulfur (Fe-S) centers, to quinones in the respiratory chain. The immediate electron acceptor for the enzyme in this species is believed to be ubiquinone. Couples the redox reaction to proton translocation (for every two electrons transferred, four hydrogen ions are translocated across the cytoplasmic membrane), and thus conserves the redox energy in a proton gradient. The polypeptide is NADH-quinone oxidoreductase subunit I (Paracidovorax citrulli (strain AAC00-1) (Acidovorax citrulli)).